A 216-amino-acid polypeptide reads, in one-letter code: Uracil phosphoribosyltransferase (216 aa).

Residues Arg32, Arg41, 75–78, and Lys77 each bind GTP; that span reads MGKI. Position 82 is a phosphoserine (Ser82). Arg85 lines the 5-phospho-alpha-D-ribose 1-diphosphate pocket. Arg102 is a binding site for GTP. Arg110 lines the 5-phospho-alpha-D-ribose 1-diphosphate pocket. Arg131 contacts GTP. 5-phospho-alpha-D-ribose 1-diphosphate-binding positions include Asp137 and 137–145; that span reads DPMLATGGS. Position 201 (Tyr201) interacts with D-ribose 5-phosphate. Uracil-binding positions include Leu202 and 207–209; that span reads GDF. Residue Asp208 coordinates 5-phospho-alpha-D-ribose 1-diphosphate.

The protein belongs to the UPRTase family. Mg(2+) serves as cofactor.

The enzyme catalyses UMP + diphosphate = 5-phospho-alpha-D-ribose 1-diphosphate + uracil. It participates in pyrimidine metabolism; UMP biosynthesis via salvage pathway; UMP from uracil: step 1/1. With respect to regulation, allosterically activated by GTP. In terms of biological role, catalyzes the conversion of uracil and 5-phospho-alpha-D-ribose 1-diphosphate (PRPP) to UMP and diphosphate in the pyrimidine salvage pathway. In Saccharomyces cerevisiae (strain ATCC 204508 / S288c) (Baker's yeast), this protein is Uracil phosphoribosyltransferase (FUR1).